A 552-amino-acid chain; its full sequence is Non-structural protein NS1 (552 aa).

The sequence is that of Non-structural protein NS1 (Segment-5) from Bluetongue virus 1 (isolate South Africa) (BTV 1).